A 1088-amino-acid chain; its full sequence is DNA mismatch repair protein MutS (1088 aa).

The tract at residues 498–579 is disordered; sequence PLDGITPPDD…SFEMPSLHGH (82 aa). Over residues 537 to 546 the composition is skewed to acidic residues; the sequence is DLFDEEEEQE. Position 816–823 (816–823) interacts with ATP; that stretch reads GPNMSGKS. The disordered stretch occupies residues 1000–1048; sequence LERRAPRSTPQPAPERTEERPAAGRPTARSHSAARGDPPRAPDGQLSLF.

The protein belongs to the DNA mismatch repair MutS family.

In terms of biological role, this protein is involved in the repair of mismatches in DNA. It is possible that it carries out the mismatch recognition step. This protein has a weak ATPase activity. In Roseiflexus castenholzii (strain DSM 13941 / HLO8), this protein is DNA mismatch repair protein MutS.